We begin with the raw amino-acid sequence, 209 residues long: Ribonuclease HII (209 aa).

The region spanning 20 to 209 is the RNase H type-2 domain; that stretch reads GLVAGVDEAG…VARSLPGACR (190 aa). A divalent metal cation-binding residues include aspartate 26, glutamate 27, and aspartate 118.

This sequence belongs to the RNase HII family. Requires Mn(2+) as cofactor. Mg(2+) is required as a cofactor.

It is found in the cytoplasm. It carries out the reaction Endonucleolytic cleavage to 5'-phosphomonoester.. Functionally, endonuclease that specifically degrades the RNA of RNA-DNA hybrids. The protein is Ribonuclease HII of Verminephrobacter eiseniae (strain EF01-2).